We begin with the raw amino-acid sequence, 397 residues long: RNA polymerase II elongation factor ELL3 (397 aa).

Disordered stretches follow at residues 164-219 (VSDP…KRSV) and 237-284 (VPSP…PEDI). Polar residues predominate over residues 168 to 178 (LASNQGQSLPG). Over residues 250–262 (QEGEDWEQEDEDM) the composition is skewed to acidic residues. Residues 269–281 (SSSVQEDSESPSP) show a composition bias toward low complexity. The 111-residue stretch at 285 to 395 (PDYLLQYRAI…LILEFEEKNR (111 aa)) folds into the OCEL domain.

It belongs to the ELL/occludin family. In terms of assembly, interacts with AFF4. Component of the super elongation complex (SEC), at least composed of EAF1, EAF2, CDK9, MLLT3/AF9, AFF (AFF1 or AFF4), the P-TEFb complex and ELL (ELL, ELL2 or ELL3). Component of the little elongation complex (LEC), at least composed of ELL (ELL, ELL2 or ELL3), ZC3H8, ICE1 and ICE2. Testis specific.

It is found in the nucleus. In terms of biological role, enhancer-binding elongation factor that specifically binds enhancers in embryonic stem cells (ES cells), marks them, and is required for their future activation during stem cell specification. Does not only bind to enhancer regions of active genes, but also marks the enhancers that are in a poised or inactive state in ES cells and is required for establishing proper RNA polymerase II occupancy at developmentally regulated genes in a cohesin-dependent manner. Probably required for priming developmentally regulated genes for later recruitment of the super elongation complex (SEC), for transcriptional activation during differentiation. Required for recruitment of P-TEFb within SEC during differentiation. Probably preloaded on germ cell chromatin, suggesting that it may prime gene activation by marking enhancers as early as in the germ cells. Promoting epithelial-mesenchymal transition (EMT). Elongation factor component of the super elongation complex (SEC), a complex required to increase the catalytic rate of RNA polymerase II transcription by suppressing transient pausing by the polymerase at multiple sites along the DNA. Component of the little elongation complex (LEC), a complex required to regulate small nuclear RNA (snRNA) gene transcription by RNA polymerase II and III. This is RNA polymerase II elongation factor ELL3 (ELL3) from Homo sapiens (Human).